A 285-amino-acid polypeptide reads, in one-letter code: Type II restriction enzyme Cfr10I (285 aa).

Residues D134 and E204 each coordinate Mg(2+).

In terms of assembly, homodimer. It depends on Mg(2+) as a cofactor.

It catalyses the reaction Endonucleolytic cleavage of DNA to give specific double-stranded fragments with terminal 5'-phosphates.. In terms of biological role, an F and P subtype restriction enzyme that recognizes the double-stranded sequence 5'-RCCGGY-3' and cleaves after R-1. This chain is Type II restriction enzyme Cfr10I (cfr10IR), found in Citrobacter freundii.